The primary structure comprises 282 residues: Undecaprenyl-diphosphatase (282 aa).

Transmembrane regions (helical) follow at residues 45-65, 86-106, 114-134, 151-171, 196-216, 224-244, and 256-276; these read AFMEMFNVVIQLGAILAVVFI, WQLWAKVVVASLPAVIIGIPL, FHNFVSVAIMLIIYGIAFILI, LPYKTALYIGFFQVLSLFPGT, FFLGIPVMFGASGIKVLKFIL, GQLTLLLVAMIVAFGVSMYVI, and FTVFGKYRIGLGALLLIYWVF.

It belongs to the UppP family.

The protein resides in the cell membrane. It carries out the reaction di-trans,octa-cis-undecaprenyl diphosphate + H2O = di-trans,octa-cis-undecaprenyl phosphate + phosphate + H(+). In terms of biological role, catalyzes the dephosphorylation of undecaprenyl diphosphate (UPP). Confers resistance to bacitracin. This chain is Undecaprenyl-diphosphatase, found in Streptococcus gordonii (strain Challis / ATCC 35105 / BCRC 15272 / CH1 / DL1 / V288).